We begin with the raw amino-acid sequence, 46 residues long: EVERKHPLGGSRPGRCPTVPPGTFGHCACLCTGDASEPKGQKCCSN.

Residues 12–46 enclose the WAP domain; sequence RPGRCPTVPPGTFGHCACLCTGDASEPKGQKCCSN.

Its function is as follows. Has antibiotic activity against several equine uterine pathogens; S.zooepidemicus, E.coli and P.aeruginosa. Highly efficient against S.zoopedemicus. Not active against K.pneumoniae. Selectively inactivates microbial serine proteases (subtilisin A and proteinase K) without inhibiting mammalian serine proteases (human neutrophil elastase, human cathepsin G and bovine pancreatic trypsin). The polypeptide is Antimicrobial peptide eNAP-2 (Equus caballus (Horse)).